A 315-amino-acid polypeptide reads, in one-letter code: Acetyl-coenzyme A carboxylase carboxyl transferase subunit beta, chloroplastic (315 aa).

The CoA carboxyltransferase N-terminal domain maps to 47-315 (LWTRCDSCEN…VYKESNSYLF (269 aa)). Zn(2+) is bound by residues Cys51, Cys54, Cys70, and Cys73. Residues 51–73 (CDSCENMLYVRFLKQNKRICEEC) form a C4-type zinc finger.

It belongs to the AccD/PCCB family. Acetyl-CoA carboxylase is a heterohexamer composed of biotin carboxyl carrier protein, biotin carboxylase and 2 subunits each of ACCase subunit alpha and ACCase plastid-coded subunit beta (accD). It depends on Zn(2+) as a cofactor.

The protein localises to the plastid. Its subcellular location is the chloroplast stroma. The catalysed reaction is N(6)-carboxybiotinyl-L-lysyl-[protein] + acetyl-CoA = N(6)-biotinyl-L-lysyl-[protein] + malonyl-CoA. The protein operates within lipid metabolism; malonyl-CoA biosynthesis; malonyl-CoA from acetyl-CoA: step 1/1. In terms of biological role, component of the acetyl coenzyme A carboxylase (ACC) complex. Biotin carboxylase (BC) catalyzes the carboxylation of biotin on its carrier protein (BCCP) and then the CO(2) group is transferred by the transcarboxylase to acetyl-CoA to form malonyl-CoA. In Physcomitrium patens (Spreading-leaved earth moss), this protein is Acetyl-coenzyme A carboxylase carboxyl transferase subunit beta, chloroplastic.